Here is a 492-residue protein sequence, read N- to C-terminus: UPF0652 protein C22H10.08 (492 aa).

The protein belongs to the UPF0652 family.

It localises to the cytoplasm. Its subcellular location is the nucleus. The chain is UPF0652 protein C22H10.08 from Schizosaccharomyces pombe (strain 972 / ATCC 24843) (Fission yeast).